The primary structure comprises 1058 residues: Carbamoyl phosphate synthase large chain (1058 aa).

Residues 1–401 (MPKRTDIQKI…SLLKACRSLE (401 aa)) form a carboxyphosphate synthetic domain region. 12 residues coordinate ATP: arginine 129, arginine 169, glycine 175, glycine 176, arginine 208, isoleucine 210, glutamate 215, glycine 241, isoleucine 242, histidine 243, glutamine 284, and glutamate 298. The ATP-grasp 1 domain occupies 133–327 (KQLMEELEQP…IAKLAAKIAV (195 aa)). 3 residues coordinate Mg(2+): glutamine 284, glutamate 298, and asparagine 300. Residues glutamine 284, glutamate 298, and asparagine 300 each coordinate Mn(2+). Positions 402–546 (IGVHHNEIPE…YSTYGWENES (145 aa)) are oligomerization domain. The interval 547–929 (IRSDKESVLV…ALYKAFEASY (383 aa)) is carbamoyl phosphate synthetic domain. Residues 671 to 861 (EQALKELDIP…MAQVATKLIL (191 aa)) form the ATP-grasp 2 domain. The ATP site is built by arginine 707, serine 746, isoleucine 748, glutamate 752, glycine 777, valine 778, histidine 779, serine 780, glutamine 820, and glutamate 832. Mg(2+)-binding residues include glutamine 820, glutamate 832, and asparagine 834. Positions 820, 832, and 834 each coordinate Mn(2+). One can recognise an MGS-like domain in the interval 930–1058 (LHLPTFGNVV…ESRSFVTEAI (129 aa)). The tract at residues 930–1058 (LHLPTFGNVV…ESRSFVTEAI (129 aa)) is allosteric domain.

The protein belongs to the CarB family. In terms of assembly, composed of two chains; the small (or glutamine) chain promotes the hydrolysis of glutamine to ammonia, which is used by the large (or ammonia) chain to synthesize carbamoyl phosphate. Tetramer of heterodimers (alpha,beta)4. Mg(2+) is required as a cofactor. Requires Mn(2+) as cofactor.

It catalyses the reaction hydrogencarbonate + L-glutamine + 2 ATP + H2O = carbamoyl phosphate + L-glutamate + 2 ADP + phosphate + 2 H(+). The catalysed reaction is hydrogencarbonate + NH4(+) + 2 ATP = carbamoyl phosphate + 2 ADP + phosphate + 2 H(+). It functions in the pathway amino-acid biosynthesis; L-arginine biosynthesis; carbamoyl phosphate from bicarbonate: step 1/1. The protein operates within pyrimidine metabolism; UMP biosynthesis via de novo pathway; (S)-dihydroorotate from bicarbonate: step 1/3. Functionally, large subunit of the glutamine-dependent carbamoyl phosphate synthetase (CPSase). CPSase catalyzes the formation of carbamoyl phosphate from the ammonia moiety of glutamine, carbonate, and phosphate donated by ATP, constituting the first step of 2 biosynthetic pathways, one leading to arginine and/or urea and the other to pyrimidine nucleotides. The large subunit (synthetase) binds the substrates ammonia (free or transferred from glutamine from the small subunit), hydrogencarbonate and ATP and carries out an ATP-coupled ligase reaction, activating hydrogencarbonate by forming carboxy phosphate which reacts with ammonia to form carbamoyl phosphate. In Streptococcus pneumoniae (strain Hungary19A-6), this protein is Carbamoyl phosphate synthase large chain.